We begin with the raw amino-acid sequence, 474 residues long: Coiled-coil domain-containing protein 6 (474 aa).

Positions 1–10 (MADSASESDT) are enriched in acidic residues. The tract at residues 1–47 (MADSASESDTDGAGGNSSSSAAMQSSCSSTSGGGGGGGGGGGGGKSG) is disordered. At A2 the chain carries N-acetylalanine. Positions 16–30 (NSSSSAAMQSSCSST) are enriched in low complexity. A compositionally biased stretch (gly residues) spans 31-47 (SGGGGGGGGGGGGGKSG). A Phosphoserine modification is found at S52. The stretch at 53–237 (PFRLEELTNR…KRILQEKLDQ (185 aa)) forms a coiled coil. Repeat copies occupy residues 106-134 (EQEE…AVNY), 135-163 (EKEE…EQHL), and 164-192 (EQEQ…QLTL). A 5 X 29 AA tandem repeats region spans residues 106–235 (EQEEEFISNT…AEKRILQEKL (130 aa)). The 4; approximate repeat unit spans residues 193–206 (EQLRREKIDLENTL). Residues 207-235 (EQEQEALVNRLWKRMDKLEAEKRILQEKL) form repeat 5. 6 positions are modified to phosphoserine: S240, S244, S249, S254, S284, and S323. A coiled-coil region spans residues 253-332 (DSPENMMRHI…SESESSLEMD (80 aa)). A disordered region spans residues 342–369 (AQGLRPRTVSSPIPYTPSPSSSRPISPG). T349 carries the post-translational modification Phosphothreonine. Residues 351 to 368 (SSPIPYTPSPSSSRPISP) show a composition bias toward low complexity. 2 positions are modified to phosphoserine: S363 and S367. An Omega-N-methylarginine modification is found at R387. Phosphoserine is present on residues S395 and S413. The interval 397-474 (GLHVQHMGTS…QHSAHPSSQP (78 aa)) is disordered. Residues 426–451 (PTPPPSPNTQTPVQPPPPPPPPPMQP) show a composition bias toward pro residues. Residues 442-451 (PPPPPPPMQP) carry the SH3-binding motif. Over residues 459-474 (SQPTPSQHSAHPSSQP) the composition is skewed to low complexity.

Ubiquitously expressed.

The protein resides in the cytoplasm. It localises to the cytoskeleton. The protein is Coiled-coil domain-containing protein 6 (CCDC6) of Homo sapiens (Human).